The sequence spans 274 residues: Diaminopimelate epimerase (274 aa).

Residues Asn11, Gln44, and Asn64 each coordinate substrate. Cys73 acts as the Proton donor in catalysis. Substrate is bound by residues 74–75 (GN), Asn157, Asn190, and 208–209 (ER). Cys217 serves as the catalytic Proton acceptor. Residue 218–219 (GT) participates in substrate binding.

The protein belongs to the diaminopimelate epimerase family. In terms of assembly, homodimer.

The protein resides in the cytoplasm. The catalysed reaction is (2S,6S)-2,6-diaminopimelate = meso-2,6-diaminopimelate. Its pathway is amino-acid biosynthesis; L-lysine biosynthesis via DAP pathway; DL-2,6-diaminopimelate from LL-2,6-diaminopimelate: step 1/1. Its function is as follows. Catalyzes the stereoinversion of LL-2,6-diaminopimelate (L,L-DAP) to meso-diaminopimelate (meso-DAP), a precursor of L-lysine and an essential component of the bacterial peptidoglycan. The sequence is that of Diaminopimelate epimerase from Blochmanniella pennsylvanica (strain BPEN).